The sequence spans 70 residues: Cuticle protein 16 isoform b (70 aa).

This Limulus polyphemus (Atlantic horseshoe crab) protein is Cuticle protein 16 isoform b.